A 344-amino-acid polypeptide reads, in one-letter code: Acireductone dioxygenase (344 aa).

Fe(2+)-binding residues include histidine 92, histidine 94, glutamate 98, and histidine 137. Residues histidine 92, histidine 94, glutamate 98, and histidine 137 each coordinate Ni(2+).

It belongs to the acireductone dioxygenase (ARD) family. Fe(2+) is required as a cofactor. The cofactor is Ni(2+).

The protein resides in the cytoplasm. Its subcellular location is the nucleus. The enzyme catalyses 1,2-dihydroxy-5-(methylsulfanyl)pent-1-en-3-one + O2 = 4-methylsulfanyl-2-oxobutanoate + formate + 2 H(+). The catalysed reaction is 1,2-dihydroxy-5-(methylsulfanyl)pent-1-en-3-one + O2 = 3-(methylsulfanyl)propanoate + CO + formate + 2 H(+). It functions in the pathway amino-acid biosynthesis; L-methionine biosynthesis via salvage pathway; L-methionine from S-methyl-5-thio-alpha-D-ribose 1-phosphate: step 5/6. In terms of biological role, catalyzes 2 different reactions between oxygen and the acireductone 1,2-dihydroxy-3-keto-5-methylthiopentene (DHK-MTPene) depending upon the metal bound in the active site. Fe-containing acireductone dioxygenase (Fe-ARD) produces formate and 2-keto-4-methylthiobutyrate (KMTB), the alpha-ketoacid precursor of methionine in the methionine recycle pathway. Ni-containing acireductone dioxygenase (Ni-ARD) produces methylthiopropionate, carbon monoxide and formate, and does not lie on the methionine recycle pathway. This is Acireductone dioxygenase from Leishmania braziliensis.